A 182-amino-acid chain; its full sequence is Ribosome hibernation promotion factor (182 aa).

It belongs to the HPF/YfiA ribosome-associated protein family. Long HPF subfamily. In terms of assembly, interacts with 100S ribosomes.

It localises to the cytoplasm. Functionally, required for dimerization of active 70S ribosomes into 100S ribosomes in stationary phase; 100S ribosomes are translationally inactive and sometimes present during exponential growth. The sequence is that of Ribosome hibernation promotion factor from Streptococcus pyogenes serotype M6 (strain ATCC BAA-946 / MGAS10394).